An 880-amino-acid chain; its full sequence is Alanine--tRNA ligase (880 aa).

Zn(2+) is bound by residues H568, H572, C670, and H674.

Belongs to the class-II aminoacyl-tRNA synthetase family. Zn(2+) is required as a cofactor.

The protein localises to the cytoplasm. It catalyses the reaction tRNA(Ala) + L-alanine + ATP = L-alanyl-tRNA(Ala) + AMP + diphosphate. Functionally, catalyzes the attachment of alanine to tRNA(Ala) in a two-step reaction: alanine is first activated by ATP to form Ala-AMP and then transferred to the acceptor end of tRNA(Ala). Also edits incorrectly charged Ser-tRNA(Ala) and Gly-tRNA(Ala) via its editing domain. The sequence is that of Alanine--tRNA ligase from Exiguobacterium sibiricum (strain DSM 17290 / CCUG 55495 / CIP 109462 / JCM 13490 / 255-15).